Reading from the N-terminus, the 405-residue chain is Argininosuccinate synthase (405 aa).

ATP is bound by residues 10–18 (AYSGGLDTS) and Ala37. The L-citrulline site is built by Tyr88 and Ser93. ATP is bound at residue Gly118. Residues Thr120, Asn124, and Asp125 each contribute to the L-aspartate site. Position 124 (Asn124) interacts with L-citrulline. L-citrulline is bound by residues Arg128, Ser179, Ser188, Glu264, and Tyr276.

This sequence belongs to the argininosuccinate synthase family. Type 1 subfamily. In terms of assembly, homotetramer.

The protein localises to the cytoplasm. The enzyme catalyses L-citrulline + L-aspartate + ATP = 2-(N(omega)-L-arginino)succinate + AMP + diphosphate + H(+). It participates in amino-acid biosynthesis; L-arginine biosynthesis; L-arginine from L-ornithine and carbamoyl phosphate: step 2/3. This is Argininosuccinate synthase from Pseudomonas syringae pv. syringae (strain B728a).